Reading from the N-terminus, the 66-residue chain is Large ribosomal subunit protein uL29 (66 aa).

It belongs to the universal ribosomal protein uL29 family.

In Hydrogenobaculum sp. (strain Y04AAS1), this protein is Large ribosomal subunit protein uL29.